A 100-amino-acid polypeptide reads, in one-letter code: MVPTSYYVLLSAILFTIGVLGVLLRRNAIVVFMAVELMLNAANLALVAFARERLGVEAQVIVFFVITVAAAEVAVGLALLVSIFRTKRTADVDEVSTLKG.

Transmembrane regions (helical) follow at residues 4–24, 29–49, and 60–80; these read TSYYVLLSAILFTIGVLGVLL, IVVFMAVELMLNAANLALVAF, and VIVFFVITVAAAEVAVGLALL.

This sequence belongs to the complex I subunit 4L family. As to quaternary structure, NDH-1 is composed of 14 different subunits. Subunits NuoA, H, J, K, L, M, N constitute the membrane sector of the complex.

It is found in the cell membrane. The enzyme catalyses a quinone + NADH + 5 H(+)(in) = a quinol + NAD(+) + 4 H(+)(out). NDH-1 shuttles electrons from NADH, via FMN and iron-sulfur (Fe-S) centers, to quinones in the respiratory chain. The immediate electron acceptor for the enzyme in this species is believed to be ubiquinone. Couples the redox reaction to proton translocation (for every two electrons transferred, four hydrogen ions are translocated across the cytoplasmic membrane), and thus conserves the redox energy in a proton gradient. The polypeptide is NADH-quinone oxidoreductase subunit K (Chloroflexus aurantiacus (strain ATCC 29366 / DSM 635 / J-10-fl)).